The primary structure comprises 681 residues: Potassium-transporting ATPase ATP-binding subunit (681 aa).

The next 4 helical transmembrane spans lie at 30–50, 59–79, 216–236, and 255–275; these read LLVY…FFGI, LAIA…EAIA, ILLV…LPFT, and IALL…SIGI. The active-site 4-aspartylphosphate intermediate is the D306. ATP-binding positions include D343, E347, 376–383, and K394; that span reads FTATTRMS. Residues D517 and D521 each coordinate Mg(2+). A run of 3 helical transmembrane segments spans residues 587–607, 615–635, and 661–681; these read FAII…LNLM, AILS…PLSL, and LVAP…LGIV.

The protein belongs to the cation transport ATPase (P-type) (TC 3.A.3) family. Type IA subfamily. The system is composed of three essential subunits: KdpA, KdpB and KdpC.

It is found in the cell membrane. The catalysed reaction is K(+)(out) + ATP + H2O = K(+)(in) + ADP + phosphate + H(+). In terms of biological role, part of the high-affinity ATP-driven potassium transport (or Kdp) system, which catalyzes the hydrolysis of ATP coupled with the electrogenic transport of potassium into the cytoplasm. This subunit is responsible for energy coupling to the transport system and for the release of the potassium ions to the cytoplasm. This chain is Potassium-transporting ATPase ATP-binding subunit, found in Listeria welshimeri serovar 6b (strain ATCC 35897 / DSM 20650 / CCUG 15529 / CIP 8149 / NCTC 11857 / SLCC 5334 / V8).